Here is a 346-residue protein sequence, read N- to C-terminus: N-acetyl-gamma-glutamyl-phosphate reductase (346 aa).

Residue Cys-150 is part of the active site.

The protein belongs to the NAGSA dehydrogenase family. Type 1 subfamily.

It localises to the cytoplasm. It carries out the reaction N-acetyl-L-glutamate 5-semialdehyde + phosphate + NADP(+) = N-acetyl-L-glutamyl 5-phosphate + NADPH + H(+). It functions in the pathway amino-acid biosynthesis; L-arginine biosynthesis; N(2)-acetyl-L-ornithine from L-glutamate: step 3/4. Functionally, catalyzes the NADPH-dependent reduction of N-acetyl-5-glutamyl phosphate to yield N-acetyl-L-glutamate 5-semialdehyde. This Desulforudis audaxviator (strain MP104C) protein is N-acetyl-gamma-glutamyl-phosphate reductase.